The primary structure comprises 220 residues: Ras-related protein Rab-3A (220 aa).

Residues Ser31, Ser32, Val33, Gly34, Lys35, Thr36, Ser37, Thr48, Pro49, Ser53, and Thr54 each contribute to the GTP site. Thr36 provides a ligand contact to Mg(2+). A Switch 1 motif is present at residues 49-58; sequence PAFVSTVGID. Thr54 and Asp77 together coordinate Mg(2+). A GTP-binding site is contributed by Gly80. The Switch 2 signature appears at 80-96; that stretch reads GQERYRTITTAYYRGAM. The residue at position 86 (Thr86) is a Phosphothreonine; by LRRK2. Asn135, Lys136, Asp138, Ala166, and Lys167 together coordinate GTP. Ser188 and Ser190 each carry phosphoserine. Residues 194-220 are disordered; sequence ADPAVTGAKQGPQLSDQQVPPHQDCAC. 2 S-geranylgeranyl cysteine lipidation sites follow: Cys218 and Cys220. Cys220 carries the post-translational modification Cysteine methyl ester.

It belongs to the small GTPase superfamily. Rab family. As to quaternary structure, interacts with RIMS1 and RIMS2. Interacts with Rabphilin-3A/RPH3A and Rab effector Noc2/RPH3AL. Interacts with SYTL4. Interacts with RAB3IP. Interacts with SGSM1 and SGSM3. Interacts with SYT1. Interacts with MYH9; this interaction is essential for lysosome exocytosis and plasma membrane repair. Interacts with STXBP1; this interaction promotes RAB3A dissociation from the vesicle membrane. Interacts with SNCA. The GTP-bound form interacts with REP15. Interacts with GDI1, GDI2, CHM and CHML; phosphorylation at Thr-86 disrupts these interactions. Interacts with MADD (via uDENN domain); the GTP-bound form is preferred for interaction. Requires Mg(2+) as cofactor. In terms of processing, phosphorylation of Thr-86 in the switch II region by LRRK2 prevents the association of RAB regulatory proteins, including CHM, CHML and RAB GDP dissociation inhibitors GDI1 and GDI2. As to expression, specifically expressed in brain.

Its subcellular location is the cytoplasm. It localises to the cytosol. It is found in the lysosome. The protein localises to the cytoplasmic vesicle. The protein resides in the secretory vesicle. Its subcellular location is the cell projection. It localises to the axon. It is found in the cell membrane. The protein localises to the presynapse. The protein resides in the postsynapse. It catalyses the reaction GTP + H2O = GDP + phosphate + H(+). Its activity is regulated as follows. Regulated by guanine nucleotide exchange factors (GEFs) including RAB3IL1 and MADD which promote the exchange of bound GDP for free GTP. Regulated by GTPase activating proteins (GAPs) including RAB3GAP1 and TBC1D10B which increase the GTP hydrolysis activity. Inhibited by GDP dissociation inhibitors (GDIs) which prevent Rab-GDP dissociation. Its function is as follows. The small GTPases Rab are key regulators of intracellular membrane trafficking, from the formation of transport vesicles to their fusion with membranes. Rabs cycle between an inactive GDP-bound form and an active GTP-bound form that is able to recruit to membranes different sets of downstream effectors directly responsible for vesicle formation, movement, tethering and fusion. RAB3A plays a central role in regulated exocytosis and secretion. Controls the recruitment, tethering and docking of secretory vesicles to the plasma membrane. Upon stimulation, switches to its active GTP-bound form, cycles to vesicles and recruits effectors such as RIMS1, RIMS2, Rabphilin-3A/RPH3A, RPH3AL or SYTL4 to help the docking of vesicules onto the plasma membrane. Upon GTP hydrolysis by GTPase-activating protein, dissociates from the vesicle membrane allowing the exocytosis to proceed. Stimulates insulin secretion through interaction with RIMS2 or RPH3AL effectors in pancreatic beta cells. Regulates calcium-dependent lysosome exocytosis and plasma membrane repair (PMR) via the interaction with 2 effectors, SYTL4 and myosin-9/MYH9. Acts as a positive regulator of acrosome content secretion in sperm cells by interacting with RIMS1. Also plays a role in the regulation of dopamine release by interacting with synaptotagmin I/SYT. This is Ras-related protein Rab-3A from Homo sapiens (Human).